We begin with the raw amino-acid sequence, 223 residues long: MNSIWARLRLASSQLPIGGYSYSQGLEAALDNGWVRDAESARTWLVDQLQLNLARFEAPLLAGLLRAALIGDWAACDAASERHRASRETRELAQESRQMGFSLHQLLEALPELDAPGRAWLARQDPPNLAAAWAMAARAWRLDAEEALSAWFWSWLENQLAVLMKTLPLGQLAAQKLASSLLPELDRACAEALRRPAVEGSAAFGLALASMTHETQYSRLFRS.

It belongs to the UreF family. As to quaternary structure, ureD, UreF and UreG form a complex that acts as a GTP-hydrolysis-dependent molecular chaperone, activating the urease apoprotein by helping to assemble the nickel containing metallocenter of UreC. The UreE protein probably delivers the nickel.

The protein localises to the cytoplasm. Functionally, required for maturation of urease via the functional incorporation of the urease nickel metallocenter. The protein is Urease accessory protein UreF of Pseudomonas aeruginosa (strain LESB58).